Here is a 349-residue protein sequence, read N- to C-terminus: E3 ubiquitin-protein ligase rnf146 (349 aa).

The interval 1–21 (MASCGEVDHSVSSLPSSKKGS) is disordered. The span at 10-21 (SVSSLPSSKKGS) shows a compositional bias: low complexity. The RING-type zinc-finger motif lies at 41–79 (CAICLQSCVHPVQLPCRHVFCFLCVKGASWQSKRCALCR). The region spanning 97–173 (ELKTGGRGAT…EHGRRRKIKR (77 aa)) is the WWE domain. A glycoprotein-binding residues include Tyr-113, Arg-116, Trp-120, Tyr-150, Gln-159, Arg-169, and Lys-181. 2 disordered regions span residues 226-251 (TTVL…SPSL) and 264-349 (DAPE…CTEV). The span at 283–292 (SMSSSPNTYA) shows a compositional bias: polar residues. Residues 298 to 307 (WSDDEGDGEA) show a composition bias toward acidic residues. Residues 308-317 (VEPREQRLRL) are compositionally biased toward basic and acidic residues.

The protein resides in the cytoplasm. Its subcellular location is the cytosol. The protein localises to the nucleus. The enzyme catalyses S-ubiquitinyl-[E2 ubiquitin-conjugating enzyme]-L-cysteine + [acceptor protein]-L-lysine = [E2 ubiquitin-conjugating enzyme]-L-cysteine + N(6)-ubiquitinyl-[acceptor protein]-L-lysine.. It functions in the pathway protein modification; protein ubiquitination. E3 ubiquitin-protein ligase that specifically binds poly-ADP-ribosylated proteins and mediates their ubiquitination and subsequent degradation. May regulate many important biological processes, such as cell survival and DNA damage response. Acts as an activator of the Wnt signaling pathway by mediating the ubiquitination of poly-ADP-ribosylated proteins. Neuroprotective protein. Protects against cell death induced by DNA damaging agents and rescues cells from G1 arrest. Promotes cell survival after gamma-irradiation. Facilitates DNA repair. This Salmo salar (Atlantic salmon) protein is E3 ubiquitin-protein ligase rnf146 (rnf146).